A 585-amino-acid polypeptide reads, in one-letter code: T-cell surface protein tactile (585 aa).

The signal sequence occupies residues 1 to 21 (MEKKWKYCAVYYIIQIHFVKG). The Extracellular segment spans residues 22–519 (VWEKTVNTEE…IVVNKPKDGM (498 aa)). Residues 38–125 (GSDVNLTCQT…YECMLVLYPE (88 aa)) enclose the Ig-like V-type 1 domain. N-linked (GlcNAc...) asparagine glycans are attached at residues asparagine 42, asparagine 97, asparagine 107, asparagine 148, asparagine 156, asparagine 166, asparagine 200, asparagine 215, asparagine 277, asparagine 278, asparagine 300, asparagine 350, and asparagine 368. Cysteines 45 and 118 form a disulfide. The Ig-like V-type 2 domain maps to 156–238 (NQTLEIPCFQ…YRLHLSPVQI (83 aa)). The cysteines at positions 163 and 247 are disulfide-linked. The Ig-like C2-type domain maps to 269–375 (PEIPVIVENN…VWNISSEKIT (107 aa)). Residues cysteine 290 and cysteine 355 are joined by a disulfide bond. 3 stretches are compositionally biased toward polar residues: residues 385–418 (TDPP…SSVT), 426–452 (RPNT…SSGT), and 460–475 (RIPS…GAGS). A disordered region spans residues 385–475 (TDPPLSVTES…YSSSPSGAGS (91 aa)). Residue asparagine 435 is glycosylated (N-linked (GlcNAc...) asparagine). N-linked (GlcNAc...) asparagine glycosylation occurs at asparagine 497. A helical membrane pass occupies residues 520 to 540 (SWPVIVAALLFCCMILFGLGV). Over 541-585 (RKWCQYQKEIMERPPPFKPPPPPIKYTCIQEPNESDLPYHEMETL) the chain is Cytoplasmic.

Homodimer; disulfide-linked. Interacts with PVR. Expressed on normal T-cell lines and clones, and some transformed T-cells, but no other cultured cell lines tested. It is expressed at very low levels on activated B-cells.

The protein resides in the membrane. Functionally, may be involved in adhesive interactions of activated T and NK cells during the late phase of the immune response. Promotes NK cell-target adhesion by interacting with PVR present on target cells. May function at a time after T and NK cells have penetrated the endothelium using integrins and selectins, when they are actively engaging diseased cells and moving within areas of inflammation. The polypeptide is T-cell surface protein tactile (CD96) (Homo sapiens (Human)).